A 184-amino-acid chain; its full sequence is Photosystem I assembly protein Ycf4 (184 aa).

The next 2 helical transmembrane spans lie at 22-42 (FCWA…GISS) and 57-77 (IIFF…LFIS).

It belongs to the Ycf4 family.

Its subcellular location is the plastid. The protein localises to the chloroplast thylakoid membrane. Functionally, seems to be required for the assembly of the photosystem I complex. This Populus alba (White poplar) protein is Photosystem I assembly protein Ycf4.